Here is a 513-residue protein sequence, read N- to C-terminus: ATP synthase subunit alpha (513 aa).

Position 169 to 176 (169 to 176 (GDRQIGKT)) interacts with ATP.

This sequence belongs to the ATPase alpha/beta chains family. In terms of assembly, F-type ATPases have 2 components, CF(1) - the catalytic core - and CF(0) - the membrane proton channel. CF(1) has five subunits: alpha(3), beta(3), gamma(1), delta(1), epsilon(1). CF(0) has three main subunits: a(1), b(2) and c(9-12). The alpha and beta chains form an alternating ring which encloses part of the gamma chain. CF(1) is attached to CF(0) by a central stalk formed by the gamma and epsilon chains, while a peripheral stalk is formed by the delta and b chains.

It localises to the cell inner membrane. It catalyses the reaction ATP + H2O + 4 H(+)(in) = ADP + phosphate + 5 H(+)(out). Its function is as follows. Produces ATP from ADP in the presence of a proton gradient across the membrane. The alpha chain is a regulatory subunit. The chain is ATP synthase subunit alpha from Shewanella piezotolerans (strain WP3 / JCM 13877).